A 904-amino-acid chain; its full sequence is Alanine--tRNA ligase (904 aa).

Residues H594, H598, C695, and H699 each coordinate Zn(2+).

This sequence belongs to the class-II aminoacyl-tRNA synthetase family. Requires Zn(2+) as cofactor.

The protein localises to the cytoplasm. The catalysed reaction is tRNA(Ala) + L-alanine + ATP = L-alanyl-tRNA(Ala) + AMP + diphosphate. Catalyzes the attachment of alanine to tRNA(Ala) in a two-step reaction: alanine is first activated by ATP to form Ala-AMP and then transferred to the acceptor end of tRNA(Ala). Also edits incorrectly charged Ser-tRNA(Ala) and Gly-tRNA(Ala) via its editing domain. The protein is Alanine--tRNA ligase of Anaeromyxobacter sp. (strain Fw109-5).